The chain runs to 1120 residues: Topless-related protein 1 (1120 aa).

The LisH domain maps to 4–36 (LSRELVFLILQFLDEEKFKETVHKLEQESGFFF). Residues 34–92 (FFFNMKYFEDEVHNGNWDEVEKYLSGFTKVDDNRYSMKIFFEIRKQKYLEALDRHDRPK) form the CTLH domain. Disordered stretches follow at residues 210 to 235 (ARAP…PLGA) and 283 to 307 (HPRT…SKRT). Position 214 is a phosphoserine (Ser-214). WD repeat units lie at residues 353–393 (SQGS…RLVQ), 415–454 (EPVV…DMRQ), 460–501 (AHVG…KRYT), 504–545 (GHEA…SRVD), 548–591 (APGR…VKRT), 595–634 (FHKR…LLTA), 639–678 (GGLQ…RLLH), 699–745 (ERPA…EPSQ), 755–794 (MRVT…RNAT), 822–860 (NPEE…TMAT), 863–903 (PPPP…VKSK), 906–945 (GHSK…KQKS), 999–1038 (ESAA…LRCR), and 1052–1091 (SNVH…GKWG). The disordered stretch occupies residues 1087–1120 (EGKWGVAPPPENGSASAVTATPSVGASASDQPQR). Positions 1099 to 1120 (GSASAVTATPSVGASASDQPQR) are enriched in polar residues.

As to quaternary structure, tetramer. Interacts with SNC1 (via TIR domain) and HDA19. Interacts with SPL (via EAR motif). Interacts with SPEAR3/TIE1. Binds to and corepresses GAF1/IDD2. Highly expressed in stamen primordium, microsporocyte, ovule primordium and megasporocyte during sporogenesis.

Its subcellular location is the nucleus. Functionally, transcriptional corepressor. Activates TIR-NB-LRR R protein-mediated immune responses through repression of negative regulators such as CNGC2/DND1. Negative regulator of jasmonate responses. The polypeptide is Topless-related protein 1 (TPR1) (Arabidopsis thaliana (Mouse-ear cress)).